The chain runs to 339 residues: Cytochrome c biogenesis protein CcsA (339 aa).

7 helical membrane passes run 6 to 26 (LEHI…LVFW), 37 to 57 (IGSL…GLLL), 71 to 91 (LYES…VSEI), 97 to 117 (WLGI…TVGL), 142 to 162 (MMIP…ALLI), 247 to 267 (IISL…VWVN), and 281 to 299 (TWAL…IRMI).

Belongs to the CcmF/CycK/Ccl1/NrfE/CcsA family. As to quaternary structure, may interact with Ccs1.

It localises to the plastid. The protein resides in the chloroplast thylakoid membrane. Required during biogenesis of c-type cytochromes (cytochrome c6 and cytochrome f) at the step of heme attachment. The chain is Cytochrome c biogenesis protein CcsA from Anthoceros angustus (Hornwort).